We begin with the raw amino-acid sequence, 638 residues long: Chaperone protein HtpG (638 aa).

Positions 1-346 (MSQQETHGFQ…SNDLPLNVSR (346 aa)) are a; substrate-binding. Residues 347–563 (EILQDNKVTT…EGEMSTQMIK (217 aa)) are b. The c stretch occupies residues 564–638 (LMEAAGQAVP…MNEMLLAKLK (75 aa)).

Belongs to the heat shock protein 90 family. Homodimer.

Its subcellular location is the cytoplasm. In terms of biological role, molecular chaperone. Has ATPase activity. The polypeptide is Chaperone protein HtpG (Shewanella sediminis (strain HAW-EB3)).